Consider the following 354-residue polypeptide: Uroporphyrinogen decarboxylase (354 aa).

Residues R27–R31, D77, Y154, T209, and H327 each bind substrate.

It belongs to the uroporphyrinogen decarboxylase family. As to quaternary structure, homodimer.

It is found in the cytoplasm. It carries out the reaction uroporphyrinogen III + 4 H(+) = coproporphyrinogen III + 4 CO2. It participates in porphyrin-containing compound metabolism; protoporphyrin-IX biosynthesis; coproporphyrinogen-III from 5-aminolevulinate: step 4/4. Its function is as follows. Catalyzes the decarboxylation of four acetate groups of uroporphyrinogen-III to yield coproporphyrinogen-III. This Pseudomonas putida (strain ATCC 700007 / DSM 6899 / JCM 31910 / BCRC 17059 / LMG 24140 / F1) protein is Uroporphyrinogen decarboxylase.